The primary structure comprises 218 residues: Large ribosomal subunit protein uL3 (218 aa).

Disordered stretches follow at residues 128-167 (FSRG…RMGG) and 199-218 (SLLN…QGGK).

Belongs to the universal ribosomal protein uL3 family. As to quaternary structure, part of the 50S ribosomal subunit. Forms a cluster with proteins L14 and L19.

Functionally, one of the primary rRNA binding proteins, it binds directly near the 3'-end of the 23S rRNA, where it nucleates assembly of the 50S subunit. This Prochlorococcus marinus (strain NATL2A) protein is Large ribosomal subunit protein uL3.